We begin with the raw amino-acid sequence, 940 residues long: DNA gyrase subunit A (940 aa).

The disordered stretch occupies residues 1-22 (MSDHTNPPSAPPDDDPNGGSLL). The Topo IIA-type catalytic domain maps to 48–538 (LPDARDGLKP…SLADQDDESL (491 aa)). The active-site O-(5'-phospho-DNA)-tyrosine intermediate is Tyr136. Positions 565-571 (QHRGGRG) match the GyrA-box motif. Positions 914 to 924 (ESVDDNGDDAD) are enriched in acidic residues. The interval 914–940 (ESVDDNGDDADSVAPAAPDGQVTDSDD) is disordered.

The protein belongs to the type II topoisomerase GyrA/ParC subunit family. Heterotetramer, composed of two GyrA and two GyrB chains. In the heterotetramer, GyrA contains the active site tyrosine that forms a transient covalent intermediate with DNA, while GyrB binds cofactors and catalyzes ATP hydrolysis.

It is found in the cytoplasm. It carries out the reaction ATP-dependent breakage, passage and rejoining of double-stranded DNA.. Its function is as follows. A type II topoisomerase that negatively supercoils closed circular double-stranded (ds) DNA in an ATP-dependent manner to modulate DNA topology and maintain chromosomes in an underwound state. Negative supercoiling favors strand separation, and DNA replication, transcription, recombination and repair, all of which involve strand separation. Also able to catalyze the interconversion of other topological isomers of dsDNA rings, including catenanes and knotted rings. Type II topoisomerases break and join 2 DNA strands simultaneously in an ATP-dependent manner. The sequence is that of DNA gyrase subunit A from Granulibacter bethesdensis (strain ATCC BAA-1260 / CGDNIH1).